Reading from the N-terminus, the 338-residue chain is Serpentine receptor class alpha-31 (338 aa).

The next 7 helical transmembrane spans lie at 23-43 (GNHCFILLIIISSVFLTVFAI), 59-79 (LLFSAIINGVVHHWSIAGIRI), 108-125 (LYYYTNLFSSLCCISLFF), 142-162 (FSKIFLLFQSISPFGILYWIF), 188-208 (VNEFRLYILGTFFVLSFVIFF), 240-260 (VCIIIATQITCLVTTASTTEI), and 276-296 (SIAFMTGLTYSNFFLPIIIIY).

The protein belongs to the nematode receptor-like protein sra family.

The protein resides in the membrane. The polypeptide is Serpentine receptor class alpha-31 (sra-31) (Caenorhabditis elegans).